The primary structure comprises 104 residues: Large ribosomal subunit protein uL24 (104 aa).

This sequence belongs to the universal ribosomal protein uL24 family. In terms of assembly, part of the 50S ribosomal subunit.

Functionally, one of two assembly initiator proteins, it binds directly to the 5'-end of the 23S rRNA, where it nucleates assembly of the 50S subunit. In terms of biological role, one of the proteins that surrounds the polypeptide exit tunnel on the outside of the subunit. The polypeptide is Large ribosomal subunit protein uL24 (Photobacterium profundum (strain SS9)).